The chain runs to 304 residues: Prephenate dehydratase (304 aa).

A Prephenate dehydratase domain is found at 3 to 178 (RIAYFGPVGT…ARTRFLLMRR (176 aa)). The 79-residue stretch at 193-271 (SIVAAAANRT…DVRFLGSFAR (79 aa)) folds into the ACT domain.

The catalysed reaction is prephenate + H(+) = 3-phenylpyruvate + CO2 + H2O. It functions in the pathway amino-acid biosynthesis; L-phenylalanine biosynthesis; phenylpyruvate from prephenate: step 1/1. In Amycolatopsis methanolica, this protein is Prephenate dehydratase (pheA).